We begin with the raw amino-acid sequence, 370 residues long: 4-hydroxy-3-methylbut-2-en-1-yl diphosphate synthase (flavodoxin) (370 aa).

Cys268, Cys271, Cys303, and Glu310 together coordinate [4Fe-4S] cluster.

It belongs to the IspG family. It depends on [4Fe-4S] cluster as a cofactor.

It carries out the reaction (2E)-4-hydroxy-3-methylbut-2-enyl diphosphate + oxidized [flavodoxin] + H2O + 2 H(+) = 2-C-methyl-D-erythritol 2,4-cyclic diphosphate + reduced [flavodoxin]. The protein operates within isoprenoid biosynthesis; isopentenyl diphosphate biosynthesis via DXP pathway; isopentenyl diphosphate from 1-deoxy-D-xylulose 5-phosphate: step 5/6. Functionally, converts 2C-methyl-D-erythritol 2,4-cyclodiphosphate (ME-2,4cPP) into 1-hydroxy-2-methyl-2-(E)-butenyl 4-diphosphate. The chain is 4-hydroxy-3-methylbut-2-en-1-yl diphosphate synthase (flavodoxin) from Bacillus cereus (strain G9842).